A 567-amino-acid polypeptide reads, in one-letter code: Proline--tRNA ligase (567 aa).

This sequence belongs to the class-II aminoacyl-tRNA synthetase family. ProS type 1 subfamily. In terms of assembly, homodimer.

It localises to the cytoplasm. It carries out the reaction tRNA(Pro) + L-proline + ATP = L-prolyl-tRNA(Pro) + AMP + diphosphate. Functionally, catalyzes the attachment of proline to tRNA(Pro) in a two-step reaction: proline is first activated by ATP to form Pro-AMP and then transferred to the acceptor end of tRNA(Pro). As ProRS can inadvertently accommodate and process non-cognate amino acids such as alanine and cysteine, to avoid such errors it has two additional distinct editing activities against alanine. One activity is designated as 'pretransfer' editing and involves the tRNA(Pro)-independent hydrolysis of activated Ala-AMP. The other activity is designated 'posttransfer' editing and involves deacylation of mischarged Ala-tRNA(Pro). The misacylated Cys-tRNA(Pro) is not edited by ProRS. This is Proline--tRNA ligase from Staphylococcus aureus (strain COL).